A 533-amino-acid chain; its full sequence is Metal transporter nramp1 homolog (533 aa).

Residues 1 to 33 (MTPRIESEESAPLVNKNNNNNNDNNNNNNVDEE) are disordered. Residues 1–68 (MTPRIESEES…PNIDKPDSKW (68 aa)) lie on the Cytoplasmic side of the membrane. Positions 14–29 (VNKNNNNNNDNNNNNN) are enriched in low complexity. A helical membrane pass occupies residues 69-89 (INFKTLWAFTGPGFLMSIAYL). At 90-101 (DPGNLESDIQAG) the chain is on the extracellular side. A helical transmembrane segment spans residues 102 to 122 (AMAGYQLLWVLFWSTVIGFWL). Topologically, residues 123 to 158 (QMLASRLGVVTGKHLAEHCREQYPKTPRLLLWLMTE) are cytoplasmic. Residues 159 to 179 (LAIIGSDIQEVIGTAIALQIL) traverse the membrane as a helical segment. Residues 180–182 (SNG) are Extracellular-facing. A helical transmembrane segment spans residues 183-203 (HIPLWAGVLFTAADTFTFLFL). At 204–212 (EKYGIRKLE) the chain is on the cytoplasmic side. A helical transmembrane segment spans residues 213–233 (AFFCSLIAIMAISFGVEYIIS). Topologically, residues 234–256 (KPDQIEVVKGVFIPLCSQNNISQ) are extracellular. An N-linked (GlcNAc...) asparagine glycan is attached at N253. Residues 257 to 277 (AVGILGAVVMPHNIYLHSALV) form a helical membrane-spanning segment. The Cytoplasmic segment spans residues 278 to 302 (QSREIDRKSETQVKIANKYNRLESA). The chain crosses the membrane as a helical span at residues 303–323 (FALIISFIINLLLVSVFAKGF). Residues 324–348 (YGETTEIGLSSAADFLMDKYGKVAK) are Extracellular-facing. The helical transmembrane segment at 349 to 368 (YIWAIGLFSAGQCSTMTGTY) threads the bilayer. Over 369–387 (SGQFVMEGFLKLKIAPWKR) the chain is Cytoplasmic. A helical membrane pass occupies residues 388 to 408 (LLITRCTAIVPAMVVAILSTS). The Extracellular portion of the chain corresponds to 409-415 (HLDSLDQ). The chain crosses the membrane as a helical span at residues 416 to 436 (WLNILQSIQLPFAVVPVLLFT). Residues 437-457 (SSEKIMGSKFKNHWLNNQFVR) lie on the Cytoplasmic side of the membrane. Residues 458-478 (FLSLLIIAINIYLIITFSMQI) form a helical membrane-spanning segment. At 479-481 (SES) the chain is on the extracellular side. The helical transmembrane segment at 482–502 (AWMISIVSISFFFYFIFIVYL) threads the bilayer. Residues 503–533 (SMGQENFNSMTKKIKNLFNNNSNQTYNNINY) are Cytoplasmic-facing.

The protein belongs to the NRAMP family.

The protein resides in the membrane. Its function is as follows. Depletes iron from the phagolysosome in an ATP-dependent process. May rather act as a symporter of protons and metal cations in an ATP-dependent process. Nramp1 overexpression protected cells from L.pneumophila infection. The polypeptide is Metal transporter nramp1 homolog (nramp1) (Dictyostelium discoideum (Social amoeba)).